Reading from the N-terminus, the 492-residue chain is Transmembrane protein 39B (492 aa).

Residues 1–53 (MGGRRGPNRTSYYRNPLCEPGSSGASGGGHSSSASVSSVRSRSRTTSGTGLSS) form a disordered region. Residue asparagine 8 is glycosylated (N-linked (GlcNAc...) asparagine). Low complexity predominate over residues 31 to 53 (SSSASVSSVRSRSRTTSGTGLSS). Helical transmembrane passes span 77 to 97 (SILF…VHYI), 115 to 135 (TSLN…IVLG), 153 to 175 (SLFR…GWSL), 185 to 205 (TYSF…IPFL), 288 to 308 (EVLV…VWFV), 322 to 342 (LFLL…LPAS), 421 to 441 (ILNI…YSLM), and 447 to 467 (HQTI…FKLL).

The protein belongs to the TMEM39 family.

Its subcellular location is the endoplasmic reticulum membrane. May protect the cells against DNA damage caused by exposure to the cold-warming stress and facilitates tissue damage repair during the recovery phase. The sequence is that of Transmembrane protein 39B from Mus musculus (Mouse).